A 127-amino-acid chain; its full sequence is Aspartate 1-decarboxylase (127 aa).

S25 (schiff-base intermediate with substrate; via pyruvic acid) is an active-site residue. S25 is modified (pyruvic acid (Ser)). A substrate-binding site is contributed by T57. The active-site Proton donor is Y58. 73 to 75 (GAA) contributes to the substrate binding site.

It belongs to the PanD family. In terms of assembly, heterooctamer of four alpha and four beta subunits. It depends on pyruvate as a cofactor. Is synthesized initially as an inactive proenzyme, which is activated by self-cleavage at a specific serine bond to produce a beta-subunit with a hydroxyl group at its C-terminus and an alpha-subunit with a pyruvoyl group at its N-terminus.

It is found in the cytoplasm. It catalyses the reaction L-aspartate + H(+) = beta-alanine + CO2. Its pathway is cofactor biosynthesis; (R)-pantothenate biosynthesis; beta-alanine from L-aspartate: step 1/1. Its function is as follows. Catalyzes the pyruvoyl-dependent decarboxylation of aspartate to produce beta-alanine. In Staphylococcus aureus (strain bovine RF122 / ET3-1), this protein is Aspartate 1-decarboxylase.